We begin with the raw amino-acid sequence, 189 residues long: Interferon alpha-5 (189 aa).

An N-terminal signal peptide occupies residues 1 to 21 (MALPFVLLMALVVLNCKSICS). 2 disulfides stabilise this stretch: C24-C122 and C52-C162.

It belongs to the alpha/beta interferon family.

The protein resides in the secreted. Produced by macrophages, IFN-alpha have antiviral activities. Interferon stimulates the production of two enzymes: a protein kinase and an oligoadenylate synthetase. The polypeptide is Interferon alpha-5 (IFNA5) (Homo sapiens (Human)).